A 407-amino-acid polypeptide reads, in one-letter code: DAZ-associated protein 1 (407 aa).

M1 carries the post-translational modification N-acetylmethionine. RRM domains lie at 10–97 and 113–190; these read GKLF…RTRP and NKIF…RAEP. The tract at residues 74 to 117 is disordered; the sequence is TLDGRNIDPKPCTPRGMQPERTRPKEGWQKGPRSDNSKSNKIFV. A compositionally biased stretch (basic and acidic residues) spans 91-111; sequence QPERTRPKEGWQKGPRSDNSK. At K150 the chain carries N6-acetyllysine. Over residues 185 to 194 the composition is skewed to basic and acidic residues; it reads VKRAEPRDSK. The segment at 185-407 is disordered; sequence VKRAEPRDSK…NVQGFHPYRR (223 aa). Residues 195 to 207 show a composition bias toward polar residues; it reads SQAPGQPGASQWG. The span at 247–262 shows a compositional bias: pro residues; sequence GPPPAGRGAPPPPPPF. R253 is subject to Omega-N-methylarginine. Residues 280-294 show a composition bias toward low complexity; it reads FPQGYGAPPQFSFGY. Pro residues predominate over residues 295–315; the sequence is GPPPPPPDQFAPPGVPPPPAT. The segment covering 364 to 379 has biased composition (low complexity); the sequence is SDPSQQPPSYGGPSVP. Positions 380–393 are enriched in gly residues; it reads GSGGPPAGGSGFGR.

As to quaternary structure, interacts with DAZ and DAZL. Post-translationally, acetylation at Lys-150 is predominantly observed in the nuclear fraction, and may regulate nucleocytoplasmic transport. In terms of tissue distribution, mainly expressed in testis. Expressed to a lower level in thymus. Weakly or not expressed in heart, liver, brain, placenta, lung, skeletal muscle, kidney and pancreas.

The protein localises to the cytoplasm. It localises to the nucleus. RNA-binding protein, which may be required during spermatogenesis. In Homo sapiens (Human), this protein is DAZ-associated protein 1 (DAZAP1).